Consider the following 367-residue polypeptide: Chorismate synthase (367 aa).

Residues arginine 48 and arginine 54 each contribute to the NADP(+) site. Residues 125–127 (RSS), 238–239 (NA), glycine 278, 293–297 (KPTSS), and arginine 319 contribute to the FMN site.

Belongs to the chorismate synthase family. Homotetramer. FMNH2 is required as a cofactor.

The catalysed reaction is 5-O-(1-carboxyvinyl)-3-phosphoshikimate = chorismate + phosphate. The protein operates within metabolic intermediate biosynthesis; chorismate biosynthesis; chorismate from D-erythrose 4-phosphate and phosphoenolpyruvate: step 7/7. Its function is as follows. Catalyzes the anti-1,4-elimination of the C-3 phosphate and the C-6 proR hydrogen from 5-enolpyruvylshikimate-3-phosphate (EPSP) to yield chorismate, which is the branch point compound that serves as the starting substrate for the three terminal pathways of aromatic amino acid biosynthesis. This reaction introduces a second double bond into the aromatic ring system. In Xanthomonas campestris pv. campestris (strain B100), this protein is Chorismate synthase.